The primary structure comprises 505 residues: Maturase K (505 aa).

This sequence belongs to the intron maturase 2 family. MatK subfamily.

The protein resides in the plastid. The protein localises to the chloroplast. Usually encoded in the trnK tRNA gene intron. Probably assists in splicing its own and other chloroplast group II introns. The protein is Maturase K of Portulacaria afra (Elephant's food).